We begin with the raw amino-acid sequence, 111 residues long: Flagellar hook-basal body complex protein FliE (111 aa).

The protein belongs to the FliE family.

The protein localises to the bacterial flagellum basal body. This is Flagellar hook-basal body complex protein FliE from Sinorhizobium fredii (strain NBRC 101917 / NGR234).